We begin with the raw amino-acid sequence, 421 residues long: Voltage-dependent calcium channel gamma-8 subunit (421 aa).

The next 4 membrane-spanning stretches (helical) occupy residues 19–39 (VQVLLTTIGAFAAFGLMTIAI), 127–147 (SSIFPILSAILLLLGGVCVAA), 157–177 (IILGAGILFVAAGLSNIIGVI), and 207–227 (FGGLSFILAEVIGVLAVNIYI). Phosphoserine is present on residues serine 251 and serine 254. Residues 271–304 (RRSRSSSRGSSEASPSRDASPGGPGGPGFASTDI) are disordered. A compositionally biased stretch (low complexity) spans 276-287 (SSRGSSEASPSR). A helical transmembrane segment spans residues 318–338 (VAAGLASAGGGGGGAGVGAYG). Disordered regions lie at residues 342–363 (GAAGGGGTGSERDRGSSAGFLT) and 378–421 (VTVT…TTPV). The segment covering 384-397 (PAAPAPAPPAPAAP) has biased composition (pro residues). Residues 408 to 421 (ASNTNTLNRKTTPV) are compositionally biased toward polar residues.

The protein belongs to the PMP-22/EMP/MP20 family. CACNG subfamily. In terms of assembly, interacts with CACNA1C. Identified in a complex with the L-type calcium channel subunits CACNA1C, CACNA2D1 and either CACNB1 or CACNB2. Acts as an auxiliary subunit for AMPA-selective glutamate receptors (AMPARs). Found in a complex with GRIA1, GRIA2, GRIA3, GRIA4, CNIH2, CNIH3, CACNG2, CACNG3, CACNG4, CACNG5 and CACNG7. Interacts with CNIH2. Found in a complex with GRIA1, GRIA2, GRIA3, GRIA4, DLG4 and CNIH2. Palmitoylated. Probably palmitoylated by ZDHHC3 and ZDHHC7.

The protein resides in the cell membrane. It is found in the postsynaptic density membrane. Regulates the activity of L-type calcium channels that contain CACNA1C as pore-forming subunit. Regulates the trafficking and gating properties of AMPA-selective glutamate receptors (AMPARs). Promotes their targeting to the cell membrane and synapses and modulates their gating properties by slowing their rates of activation, deactivation and desensitization and by mediating their resensitization. Does not show subunit-specific AMPA receptor regulation and regulates all AMPAR subunits. Thought to stabilize the calcium channel in an inactivated (closed) state. In Rattus norvegicus (Rat), this protein is Voltage-dependent calcium channel gamma-8 subunit.